The primary structure comprises 673 residues: eEF1A lysine and N-terminal methyltransferase homolog (673 aa).

Belongs to the methyltransferase superfamily.

It catalyses the reaction L-lysyl-[protein] + S-adenosyl-L-methionine = N(6)-methyl-L-lysyl-[protein] + S-adenosyl-L-homocysteine + H(+). The catalysed reaction is N(6)-methyl-L-lysyl-[protein] + S-adenosyl-L-methionine = N(6),N(6)-dimethyl-L-lysyl-[protein] + S-adenosyl-L-homocysteine + H(+). It carries out the reaction N-terminal glycyl-L-lysyl-L-glutamyl-[protein] + 3 S-adenosyl-L-methionine = N-terminal N,N,N-trimethyl-glycyl-L-lysyl-L-glutamyl-[protein] + 3 S-adenosyl-L-homocysteine + 3 H(+). Functionally, dual methyltransferase. It catalyzes N-terminal methylation of target proteins via its C-terminus. It catalyzes dimethylation on lysine residues of target proteins via its N-terminus. This chain is eEF1A lysine and N-terminal methyltransferase homolog, found in Drosophila pseudoobscura pseudoobscura (Fruit fly).